We begin with the raw amino-acid sequence, 233 residues long: Orotidine 5'-phosphate decarboxylase (233 aa).

Substrate-binding positions include aspartate 11, lysine 33, 60 to 69 (DLKFHDIPNT), threonine 120, arginine 181, glutamine 190, glycine 210, and arginine 211. Lysine 62 serves as the catalytic Proton donor.

This sequence belongs to the OMP decarboxylase family. Type 1 subfamily. In terms of assembly, homodimer.

The enzyme catalyses orotidine 5'-phosphate + H(+) = UMP + CO2. Its pathway is pyrimidine metabolism; UMP biosynthesis via de novo pathway; UMP from orotate: step 2/2. Functionally, catalyzes the decarboxylation of orotidine 5'-monophosphate (OMP) to uridine 5'-monophosphate (UMP). The sequence is that of Orotidine 5'-phosphate decarboxylase from Vibrio parahaemolyticus serotype O3:K6 (strain RIMD 2210633).